The following is a 681-amino-acid chain: Terpene synthase 6, chloroplastic (681 aa).

D433, D437, N577, and E585 together coordinate Mg(2+). The short motif at 433 to 437 (DDLFD) is the DDXXD motif element.

This sequence belongs to the terpene synthase family. The cofactor is Mg(2+). Expressed in leaves.

The protein resides in the plastid. The protein localises to the chloroplast. It participates in secondary metabolite biosynthesis; terpenoid biosynthesis. Its function is as follows. May be involved in the biosynthesis of ent-kaurene diterpenoids natural products such as oridonin, miltiradiene, eriocalyxin B and nezukol, known to exhibit antitumor, anti-inflammatory and antibacterial activities. This is Terpene synthase 6, chloroplastic from Isodon rubescens (Rabdosia rubescens).